We begin with the raw amino-acid sequence, 459 residues long: tRNA modification GTPase MnmE (459 aa).

Residues Arg22, Glu85, and Arg124 each contribute to the (6S)-5-formyl-5,6,7,8-tetrahydrofolate site. The TrmE-type G domain maps to 221-380; that stretch reads GLSTVIVGKP…LEIQIRDLFF (160 aa). Asn231 serves as a coordination point for K(+). Residues 231-236, 250-256, and 275-278 each bind GTP; these read NVGKSS, TEVAGTT, and DTAG. Ser235 provides a ligand contact to Mg(2+). Residues Thr250, Val252, and Thr255 each coordinate K(+). Thr256 is a Mg(2+) binding site. Lys459 contacts (6S)-5-formyl-5,6,7,8-tetrahydrofolate.

It belongs to the TRAFAC class TrmE-Era-EngA-EngB-Septin-like GTPase superfamily. TrmE GTPase family. As to quaternary structure, homodimer. Heterotetramer of two MnmE and two MnmG subunits. Requires K(+) as cofactor.

It localises to the cytoplasm. In terms of biological role, exhibits a very high intrinsic GTPase hydrolysis rate. Involved in the addition of a carboxymethylaminomethyl (cmnm) group at the wobble position (U34) of certain tRNAs, forming tRNA-cmnm(5)s(2)U34. This is tRNA modification GTPase MnmE from Staphylococcus aureus (strain Mu3 / ATCC 700698).